A 366-amino-acid polypeptide reads, in one-letter code: Holliday junction branch migration complex subunit RuvB (366 aa).

Residues 1–50 (MAIISSKKQPPEPNGEPKQRRESAKAPSTENILKPEAAIDEQEQQEEGIR) are disordered. A large ATPase domain (RuvB-L) region spans residues 13-210 (PNGEPKQRRE…FGLIQKLRFY (198 aa)). Basic and acidic residues predominate over residues 15 to 24 (GEPKQRRESA). ATP is bound by residues isoleucine 49, arginine 50, glycine 91, lysine 94, threonine 95, threonine 96, 157 to 159 (EDY), arginine 200, tyrosine 210, and arginine 247. Threonine 95 is a binding site for Mg(2+). Residues 211-281 (EVDELTQIVL…IASEALQLFQ (71 aa)) form a small ATPAse domain (RuvB-S) region. Residues 284 to 366 (PCGLDWTDRQ…TPPNEQLSLL (83 aa)) form a head domain (RuvB-H) region. Positions 339 and 344 each coordinate DNA.

Belongs to the RuvB family. As to quaternary structure, homohexamer. Forms an RuvA(8)-RuvB(12)-Holliday junction (HJ) complex. HJ DNA is sandwiched between 2 RuvA tetramers; dsDNA enters through RuvA and exits via RuvB. An RuvB hexamer assembles on each DNA strand where it exits the tetramer. Each RuvB hexamer is contacted by two RuvA subunits (via domain III) on 2 adjacent RuvB subunits; this complex drives branch migration. In the full resolvosome a probable DNA-RuvA(4)-RuvB(12)-RuvC(2) complex forms which resolves the HJ.

Its subcellular location is the cytoplasm. It catalyses the reaction ATP + H2O = ADP + phosphate + H(+). The RuvA-RuvB-RuvC complex processes Holliday junction (HJ) DNA during genetic recombination and DNA repair, while the RuvA-RuvB complex plays an important role in the rescue of blocked DNA replication forks via replication fork reversal (RFR). RuvA specifically binds to HJ cruciform DNA, conferring on it an open structure. The RuvB hexamer acts as an ATP-dependent pump, pulling dsDNA into and through the RuvAB complex. RuvB forms 2 homohexamers on either side of HJ DNA bound by 1 or 2 RuvA tetramers; 4 subunits per hexamer contact DNA at a time. Coordinated motions by a converter formed by DNA-disengaged RuvB subunits stimulates ATP hydrolysis and nucleotide exchange. Immobilization of the converter enables RuvB to convert the ATP-contained energy into a lever motion, pulling 2 nucleotides of DNA out of the RuvA tetramer per ATP hydrolyzed, thus driving DNA branch migration. The RuvB motors rotate together with the DNA substrate, which together with the progressing nucleotide cycle form the mechanistic basis for DNA recombination by continuous HJ branch migration. Branch migration allows RuvC to scan DNA until it finds its consensus sequence, where it cleaves and resolves cruciform DNA. The polypeptide is Holliday junction branch migration complex subunit RuvB (Nostoc punctiforme (strain ATCC 29133 / PCC 73102)).